The chain runs to 216 residues: Octanoyltransferase (216 aa).

A BPL/LPL catalytic domain is found at 32–207; that stretch reads PDSQDEIWLV…QLVKHLDYAE (176 aa). Substrate-binding positions include 71–78, 138–140, and 151–153; these read RGGQVTYH, SLG, and GLA. C169 serves as the catalytic Acyl-thioester intermediate.

Belongs to the LipB family.

It localises to the cytoplasm. The enzyme catalyses octanoyl-[ACP] + L-lysyl-[protein] = N(6)-octanoyl-L-lysyl-[protein] + holo-[ACP] + H(+). Its pathway is protein modification; protein lipoylation via endogenous pathway; protein N(6)-(lipoyl)lysine from octanoyl-[acyl-carrier-protein]: step 1/2. Catalyzes the transfer of endogenously produced octanoic acid from octanoyl-acyl-carrier-protein onto the lipoyl domains of lipoate-dependent enzymes. Lipoyl-ACP can also act as a substrate although octanoyl-ACP is likely to be the physiological substrate. The protein is Octanoyltransferase of Pseudomonas putida (strain ATCC 47054 / DSM 6125 / CFBP 8728 / NCIMB 11950 / KT2440).